Consider the following 182-residue polypeptide: tRNA-splicing endonuclease (182 aa).

Catalysis depends on residues Y119, H127, and K158.

The protein belongs to the tRNA-intron endonuclease family. Archaeal short subfamily. In terms of assembly, homotetramer; although the tetramer contains four active sites, only two participate in the cleavage. Therefore, it should be considered as a dimer of dimers.

The enzyme catalyses pretRNA = a 3'-half-tRNA molecule with a 5'-OH end + a 5'-half-tRNA molecule with a 2',3'-cyclic phosphate end + an intron with a 2',3'-cyclic phosphate and a 5'-hydroxyl terminus.. Functionally, endonuclease that removes tRNA introns. Cleaves pre-tRNA at the 5'- and 3'-splice sites to release the intron. The products are an intron and two tRNA half-molecules bearing 2',3' cyclic phosphate and 5'-OH termini. Recognizes a pseudosymmetric substrate in which 2 bulged loops of 3 bases are separated by a stem of 4 bp. The protein is tRNA-splicing endonuclease of Saccharolobus islandicus (strain M.16.27) (Sulfolobus islandicus).